The primary structure comprises 332 residues: Glycerol-3-phosphate dehydrogenase [NAD(P)+] (332 aa).

4 residues coordinate NADPH: S10, W11, K31, and K105. Residues K105, G136, and S138 each contribute to the sn-glycerol 3-phosphate site. Residue A140 coordinates NADPH. Sn-glycerol 3-phosphate-binding residues include K191, D244, S254, R255, and N256. The active-site Proton acceptor is K191. NADPH is bound at residue R255. The NADPH site is built by V279 and E281.

The protein belongs to the NAD-dependent glycerol-3-phosphate dehydrogenase family.

The protein localises to the cytoplasm. It catalyses the reaction sn-glycerol 3-phosphate + NAD(+) = dihydroxyacetone phosphate + NADH + H(+). The enzyme catalyses sn-glycerol 3-phosphate + NADP(+) = dihydroxyacetone phosphate + NADPH + H(+). Its pathway is membrane lipid metabolism; glycerophospholipid metabolism. Its function is as follows. Catalyzes the reduction of the glycolytic intermediate dihydroxyacetone phosphate (DHAP) to sn-glycerol 3-phosphate (G3P), the key precursor for phospholipid synthesis. This chain is Glycerol-3-phosphate dehydrogenase [NAD(P)+], found in Anaeromyxobacter dehalogenans (strain 2CP-C).